The following is a 478-amino-acid chain: MATSCEDVSPVKSPAVTPLKIRELINEGIVTGERSSIGRKETAVVPEENNGFEDPLSNSSYESTSKDAFFGRVESFSSLKWAGKPSELCPLICAKYGWSNIECDMLKCSSCNAYLCASLQPVLDFSKYKQRCVELQEALRKAHEKFCFWPDSPCPDYFWALMVTEPSSVLSDFVGRFDNLCHLEIQLPSIKHEDLKNMDITEETVSHLLRLIEDELKSKDGREDNSRLASDSLQVHISACILALCGWSTSYTSGSLCIINCPRCMRKVGLWAFQQLEAVELDNSLSAPNTPVSPAEGHERSPFGIMSPNRRVTRSRDAEQSPALAYGRTRSSDLLSPADSEAVRSRPVTRSMGQGESSGLSNELHSSPLRRSKRPRLCSSSSSDTSPRGCFDPLSQHRSWCPWVNVCQASETSTLGSEIQEEASRKEYGWKEVLNVLLAEENSRTLSDPDTSSVPEKSHKVFRIFRQWQMAASASENP.

A C3HC-type zinc finger spans residues 93 to 147; sequence CAKYGWSNIECDMLKCSSCNAYLCASLQPVLDFSKYKQRCVELQEALRKAHEKFC. A disordered region spans residues 285–389; it reads LSAPNTPVSP…SSSSDTSPRG (105 aa). The segment covering 351–363 has biased composition (polar residues); the sequence is SMGQGESSGLSNE. The segment covering 377-388 has biased composition (low complexity); that stretch reads LCSSSSSDTSPR.

Phosphorylated. May also be weakly phosphorylated on Tyr residues.

It localises to the nucleus. Its subcellular location is the nucleus envelope. In terms of biological role, required for proper positioning of a substantial amount of TPR at the nuclear basket (NB) through interaction with TPR. The protein is Zinc finger C3HC-type protein 1-like (zc3hc1) of Xenopus tropicalis (Western clawed frog).